A 284-amino-acid chain; its full sequence is MSQPEPNPFIIFATVAAIISSAVAYYFFQLSRKNAPVLKPNDFQKFPLIEKTRVSHNTCVYRFGLPRSTDRLGLPIGQHIAIGATINDKEVVRSYTPISTDDELGYFDLLIKAYENGNISRHVESKKIGETIDIRGPKGFFTYTPGMVESFGMIAGGTGITPMYQILTAILRNPEDKTKVSLVYANVTEDDILLKEELNKMAREHPDRFKIYYVLNTPPENWTGGVGFVTPEIMDKHLPKASEATNLLLCGPPPMISAMKKAAVGLGYQKAKPVSKLGDQIFVF.

The helical transmembrane segment at 8-28 (PFIIFATVAAIISSAVAYYFF) threads the bilayer. An FAD-binding FR-type domain is found at 41–144 (NDFQKFPLIE…RGPKGFFTYT (104 aa)). FAD contacts are provided by residues 124-139 (ESKK…GPKG) and 150-182 (SFGM…KVSL).

Belongs to the flavoprotein pyridine nucleotide cytochrome reductase family. Monomer. Component of the 2-(3-amino-3-carboxypropyl)histidine synthase complex composed of DPH1, DPH2, DPH3 and a NADH-dependent reductase, predominantly CBR1. The cofactor is FAD.

It localises to the mitochondrion outer membrane. It carries out the reaction 2 Fe(III)-[cytochrome b5] + NADH = 2 Fe(II)-[cytochrome b5] + NAD(+) + H(+). The enzyme catalyses 2 Fe(3+)-[Dph3] + NADH = 2 Fe(2+)-[Dph3] + NAD(+) + H(+). It participates in protein modification; peptidyl-diphthamide biosynthesis. In terms of biological role, NADH-dependent reductase for DPH3 and cytochrome b5. Required for the first step of diphthamide biosynthesis, a post-translational modification of histidine which occurs in elongation factor 2. DPH1 and DPH2 transfer a 3-amino-3-carboxypropyl (ACP) group from S-adenosyl-L-methionine (SAM) to a histidine residue, the reaction is assisted by a reduction system comprising DPH3 and a NADH-dependent reductase, predominantly CBR1. By reducing DPH3, also involved in the formation of the tRNA wobble base modification mcm5s 2U (5-methoxycarbonylmethyl-2-thiouridine), mediated by the elongator complex. The cytochrome b5/NADH cytochrome b5 reductase electron transfer system supports the catalytic activity of several sterol biosynthetic enzymes. This is NADH-cytochrome b5 reductase 1 (CBR1) from Debaryomyces hansenii (strain ATCC 36239 / CBS 767 / BCRC 21394 / JCM 1990 / NBRC 0083 / IGC 2968) (Yeast).